A 348-amino-acid chain; its full sequence is D-erythrose-4-phosphate dehydrogenase (348 aa).

Residues 12–13 and arginine 81 each bind NAD(+); that span reads RI. Substrate-binding positions include 154 to 156, arginine 200, 213 to 214, and arginine 236; these read SCT and TK. Catalysis depends on cysteine 155, which acts as the Nucleophile. Asparagine 318 contacts NAD(+).

It belongs to the glyceraldehyde-3-phosphate dehydrogenase family. Epd subfamily. Homotetramer.

The protein localises to the cytoplasm. The enzyme catalyses D-erythrose 4-phosphate + NAD(+) + H2O = 4-phospho-D-erythronate + NADH + 2 H(+). It participates in cofactor biosynthesis; pyridoxine 5'-phosphate biosynthesis; pyridoxine 5'-phosphate from D-erythrose 4-phosphate: step 1/5. In terms of biological role, catalyzes the NAD-dependent conversion of D-erythrose 4-phosphate to 4-phosphoerythronate. The sequence is that of D-erythrose-4-phosphate dehydrogenase from Salmonella gallinarum (strain 287/91 / NCTC 13346).